We begin with the raw amino-acid sequence, 55 residues long: Large ribosomal subunit protein bL33 (55 aa).

It belongs to the bacterial ribosomal protein bL33 family.

In Rhodopseudomonas palustris (strain BisB18), this protein is Large ribosomal subunit protein bL33.